Reading from the N-terminus, the 426-residue chain is Glutamate-1-semialdehyde 2,1-aminomutase (426 aa).

Residue Lys-265 is modified to N6-(pyridoxal phosphate)lysine.

This sequence belongs to the class-III pyridoxal-phosphate-dependent aminotransferase family. HemL subfamily. Homodimer. Requires pyridoxal 5'-phosphate as cofactor.

The protein localises to the cytoplasm. It carries out the reaction (S)-4-amino-5-oxopentanoate = 5-aminolevulinate. It participates in porphyrin-containing compound metabolism; protoporphyrin-IX biosynthesis; 5-aminolevulinate from L-glutamyl-tRNA(Glu): step 2/2. The sequence is that of Glutamate-1-semialdehyde 2,1-aminomutase from Akkermansia muciniphila (strain ATCC BAA-835 / DSM 22959 / JCM 33894 / BCRC 81048 / CCUG 64013 / CIP 107961 / Muc).